We begin with the raw amino-acid sequence, 609 residues long: Alpha-fetoprotein (609 aa).

Residues 1–18 form the signal peptide; the sequence is MKWVESIFLIFLLNFTES. Albumin domains are found at residues 19 to 210, 211 to 402, and 403 to 601; these read RTLH…ATVT, KELR…EELQ, and KYIQ…KLIS. Residue His-22 participates in Cu(2+) binding. Asn-42 carries an N-linked (GlcNAc...) asparagine glycan. Intrachain disulfides connect Cys-99-Cys-114, Cys-113-Cys-124, Cys-148-Cys-193, Cys-192-Cys-201, Cys-224-Cys-270, Cys-269-Cys-277, Cys-289-Cys-303, and Cys-302-Cys-313. Phosphoserine occurs at positions 111, 115, and 117. N-linked (GlcNAc...) asparagine glycosylation occurs at Asn-251. Phosphoserine is present on Ser-344. 7 disulfide bridges follow: Cys-384–Cys-393, Cys-416–Cys-462, Cys-461–Cys-472, Cys-485–Cys-501, Cys-500–Cys-511, Cys-538–Cys-583, and Cys-582–Cys-591. Position 444 is a phosphoserine (Ser-444).

Belongs to the ALB/AFP/VDB family. In terms of assembly, dimeric and trimeric forms have been found in addition to the monomeric form. In terms of tissue distribution, plasma. Synthesized by the fetal liver and yolk sac.

It localises to the secreted. Binds copper, nickel, and fatty acids as well as, and bilirubin less well than, serum albumin. The sequence is that of Alpha-fetoprotein (AFP) from Pan troglodytes (Chimpanzee).